The following is a 461-amino-acid chain: Cysteine--tRNA ligase (461 aa).

Zn(2+) is bound at residue Cys28. The short motif at 30–40 (ITVYDLCHIGH) is the 'HIGH' region element. Residues Cys209, His234, and Glu238 each coordinate Zn(2+). Residues 266-270 (KMSKS) carry the 'KMSKS' region motif. Lys269 lines the ATP pocket.

The protein belongs to the class-I aminoacyl-tRNA synthetase family. Monomer. It depends on Zn(2+) as a cofactor.

Its subcellular location is the cytoplasm. The enzyme catalyses tRNA(Cys) + L-cysteine + ATP = L-cysteinyl-tRNA(Cys) + AMP + diphosphate. The polypeptide is Cysteine--tRNA ligase (Escherichia coli (strain K12 / MC4100 / BW2952)).